The primary structure comprises 803 residues: Nucleoporin nup82 (803 aa).

As to quaternary structure, component of the nuclear pore complex (NPC). NPC constitutes the exclusive means of nucleocytoplasmic transport. NPCs allow the passive diffusion of ions and small molecules and the active, nuclear transport receptor-mediated bidirectional transport of macromolecules such as proteins, RNAs, ribonucleoparticles (RNPs), and ribosomal subunits across the nuclear envelope.

It localises to the nucleus. The protein localises to the nuclear pore complex. Its subcellular location is the nucleus membrane. In terms of biological role, functions as a component of the nuclear pore complex (NPC). NPC components, collectively referred to as nucleoporins (NUPs), can play the role of both NPC structural components and of docking or interaction partners for transiently associated nuclear transport factors. In Schizosaccharomyces pombe (strain 972 / ATCC 24843) (Fission yeast), this protein is Nucleoporin nup82.